The sequence spans 1019 residues: Insulin-degrading enzyme (1019 aa).

His108 is a binding site for Zn(2+). Catalysis depends on Glu111, which acts as the Proton acceptor. Zn(2+)-binding residues include His112 and Glu189. N6-succinyllysine is present on Lys192. 359 to 363 (LVGGQ) is a binding site for substrate. Arg429 is a binding site for ATP. The residue at position 697 (Lys697) is an N6-succinyllysine. A SlyX motif motif is present at residues 853–858 (EKPPHY). Position 895–901 (895–901 (DKPKKLS)) interacts with ATP.

This sequence belongs to the peptidase M16 family. In terms of assembly, homodimer. Can also form homotetramers. Zn(2+) serves as cofactor. In terms of tissue distribution, detected in brain and liver (at protein level). Detected in liver.

The protein localises to the cytoplasm. It localises to the cytosol. It is found in the cell membrane. Its subcellular location is the secreted. The catalysed reaction is Degradation of insulin, glucagon and other polypeptides. No action on proteins.. Activated by ATP, other nucleotide triphosphates and small peptides. Inhibited by bacitracin. Its function is as follows. Plays a role in the cellular breakdown of insulin, APP peptides, IAPP peptides, natriuretic peptides, glucagon, bradykinin, kallidin, and other peptides, and thereby plays a role in intercellular peptide signaling. Substrate binding induces important conformation changes, making it possible to bind and degrade larger substrates, such as insulin. Contributes to the regulation of peptide hormone signaling cascades and regulation of blood glucose homeostasis via its role in the degradation of insulin, glucagon and IAPP. Plays a role in the degradation and clearance of APP-derived amyloidogenic peptides that are secreted by neurons and microglia. Degrades the natriuretic peptides ANP, BNP and CNP, inactivating their ability to raise intracellular cGMP. Also degrades an aberrant frameshifted 40-residue form of NPPA (fsNPPA) which is associated with familial atrial fibrillation in heterozygous patients. Involved in antigen processing. Produces both the N terminus and the C terminus of MAGEA3-derived antigenic peptide (EVDPIGHLY) that is presented to cytotoxic T lymphocytes by MHC class I. This is Insulin-degrading enzyme (Ide) from Mus musculus (Mouse).